The chain runs to 117 residues: Ribosome-binding factor A (117 aa).

The protein belongs to the RbfA family. In terms of assembly, monomer. Binds 30S ribosomal subunits, but not 50S ribosomal subunits or 70S ribosomes.

Its subcellular location is the cytoplasm. One of several proteins that assist in the late maturation steps of the functional core of the 30S ribosomal subunit. Associates with free 30S ribosomal subunits (but not with 30S subunits that are part of 70S ribosomes or polysomes). Required for efficient processing of 16S rRNA. May interact with the 5'-terminal helix region of 16S rRNA. This chain is Ribosome-binding factor A, found in Lactiplantibacillus plantarum (strain ATCC BAA-793 / NCIMB 8826 / WCFS1) (Lactobacillus plantarum).